The following is a 119-amino-acid chain: Holo-[acyl-carrier-protein] synthase (119 aa).

2 residues coordinate Mg(2+): aspartate 7 and glutamate 53.

Belongs to the P-Pant transferase superfamily. AcpS family. It depends on Mg(2+) as a cofactor.

Its subcellular location is the cytoplasm. The catalysed reaction is apo-[ACP] + CoA = holo-[ACP] + adenosine 3',5'-bisphosphate + H(+). Transfers the 4'-phosphopantetheine moiety from coenzyme A to a Ser of acyl-carrier-protein. The protein is Holo-[acyl-carrier-protein] synthase of Dehalococcoides mccartyi (strain CBDB1).